We begin with the raw amino-acid sequence, 147 residues long: Ribonuclease H (147 aa).

Positions 1–142 constitute an RNase H type-1 domain; the sequence is MKKVSIYTDG…CDKLATDEIK (142 aa). The Mg(2+) site is built by Asp-9, Glu-47, Asp-69, and Asp-134.

The protein belongs to the RNase H family. In terms of assembly, monomer. It depends on Mg(2+) as a cofactor.

The protein localises to the cytoplasm. It carries out the reaction Endonucleolytic cleavage to 5'-phosphomonoester.. Functionally, endonuclease that specifically degrades the RNA of RNA-DNA hybrids. This is Ribonuclease H from Acetivibrio thermocellus (strain ATCC 27405 / DSM 1237 / JCM 9322 / NBRC 103400 / NCIMB 10682 / NRRL B-4536 / VPI 7372) (Clostridium thermocellum).